We begin with the raw amino-acid sequence, 569 residues long: Urease subunit alpha (569 aa).

A Urease domain is found at 131–569; that stretch reads GGIDSHIHFI…LPLAQRYFLF (439 aa). Ni(2+)-binding residues include H136, H138, and K219. K219 carries the N6-carboxylysine modification. H221 serves as a coordination point for substrate. Ni(2+)-binding residues include H248 and H274. The Proton donor role is filled by H322. Position 362 (D362) interacts with Ni(2+).

This sequence belongs to the metallo-dependent hydrolases superfamily. Urease alpha subunit family. In terms of assembly, heterotrimer of UreA (gamma), UreB (beta) and UreC (alpha) subunits. Three heterotrimers associate to form the active enzyme. Ni cation is required as a cofactor. In terms of processing, carboxylation allows a single lysine to coordinate two nickel ions.

It localises to the cytoplasm. The enzyme catalyses urea + 2 H2O + H(+) = hydrogencarbonate + 2 NH4(+). It functions in the pathway nitrogen metabolism; urea degradation; CO(2) and NH(3) from urea (urease route): step 1/1. The polypeptide is Urease subunit alpha (Herpetosiphon aurantiacus (strain ATCC 23779 / DSM 785 / 114-95)).